A 159-amino-acid chain; its full sequence is Serine-protein kinase RsbW (159 aa).

The protein belongs to the anti-sigma-factor family.

It carries out the reaction L-seryl-[protein] + ATP = O-phospho-L-seryl-[protein] + ADP + H(+). The catalysed reaction is L-threonyl-[protein] + ATP = O-phospho-L-threonyl-[protein] + ADP + H(+). In terms of biological role, negative regulator of sigma-B activity. Phosphorylates and inactivates its specific antagonist protein, RsbV. Upon phosphorylation of RsbV, RsbW is released and binds to sigma-B, thereby blocking its ability to form an RNA polymerase holoenzyme (E-sigma-B). The sequence is that of Serine-protein kinase RsbW from Staphylococcus epidermidis.